A 126-amino-acid chain; its full sequence is Large ribosomal subunit protein bL12 (126 aa).

It belongs to the bacterial ribosomal protein bL12 family. As to quaternary structure, homodimer. Part of the ribosomal stalk of the 50S ribosomal subunit. Forms a multimeric L10(L12)X complex, where L10 forms an elongated spine to which 2 to 4 L12 dimers bind in a sequential fashion. Binds GTP-bound translation factors.

In terms of biological role, forms part of the ribosomal stalk which helps the ribosome interact with GTP-bound translation factors. Is thus essential for accurate translation. The sequence is that of Large ribosomal subunit protein bL12 from Acidovorax sp. (strain JS42).